The primary structure comprises 601 residues: Glutamine--fructose-6-phosphate aminotransferase [isomerizing] (601 aa).

The active-site Nucleophile; for GATase activity is Cys2. Residues 2-218 enclose the Glutamine amidotransferase type-2 domain; the sequence is CGIVGYIGYD…DHEIVIVKRD (217 aa). SIS domains are found at residues 284–423 and 453–591; these read IIND…NHGR and IATD…VDKP. Residue Lys596 is the For Fru-6P isomerization activity of the active site.

As to quaternary structure, homodimer.

The protein resides in the cytoplasm. The enzyme catalyses D-fructose 6-phosphate + L-glutamine = D-glucosamine 6-phosphate + L-glutamate. Its function is as follows. Catalyzes the first step in hexosamine metabolism, converting fructose-6P into glucosamine-6P using glutamine as a nitrogen source. The chain is Glutamine--fructose-6-phosphate aminotransferase [isomerizing] from Staphylococcus epidermidis (strain ATCC 35984 / DSM 28319 / BCRC 17069 / CCUG 31568 / BM 3577 / RP62A).